Reading from the N-terminus, the 131-residue chain is Cystatin J (131 aa).

An N-terminal signal peptide occupies residues 1 to 18 (MHLYLCVLVCLSIGMANC). Residues 35–109 (DEILLTGVEF…RMNLPTKCSF (75 aa)) enclose the Cystatin domain. The Secondary area of contact signature appears at 68-72 (QVVAG). Disulfide bonds link C86–C97 and C107–C128.

Belongs to the cystatin family.

It localises to the secreted. Its subcellular location is the nematocyst. Functionally, this recombinant protein inhibits the C1 cysteine protease papain (Ki is below 0.5 nM). This is Cystatin J from Cyanea capillata (Lion's mane jellyfish).